A 65-amino-acid polypeptide reads, in one-letter code: Translational regulator CsrA (65 aa).

Belongs to the CsrA/RsmA family. Homodimer; the beta-strands of each monomer intercalate to form a hydrophobic core, while the alpha-helices form wings that extend away from the core.

The protein resides in the cytoplasm. A translational regulator that binds mRNA to regulate translation initiation and/or mRNA stability. Usually binds in the 5'-UTR at or near the Shine-Dalgarno sequence preventing ribosome-binding, thus repressing translation. Its main target seems to be the major flagellin gene, while its function is anatagonized by FliW. This chain is Translational regulator CsrA, found in Bordetella petrii (strain ATCC BAA-461 / DSM 12804 / CCUG 43448).